We begin with the raw amino-acid sequence, 89 residues long: MSMFGIGKNNQTINPQNIAMAEQEVEMMSDIFNRLVMTCHKKCISPKYYEADLTKGESVCIDRCVSKYFEANQSLSQHMQKRGQENPTP.

The Twin CX3C motif signature appears at 39–64 (CHKKCISPKYYEADLTKGESVCIDRC). Intrachain disulfides connect C39-C64 and C43-C60.

The protein belongs to the small Tim family. In terms of assembly, heterohexamer; composed of 3 copies of TIM9 and 3 copies of TIM10, named soluble 70 kDa complex. Associates directly with the TIM22 complex, whose core is composed of TIM22 and TIM54. Interacts with the transmembrane regions of multi-pass transmembrane proteins in transit.

The protein localises to the mitochondrion inner membrane. Mitochondrial intermembrane chaperone that participates in the import and insertion of multi-pass transmembrane proteins into the mitochondrial inner membrane. Also required for the transfer of beta-barrel precursors from the TOM complex to the sorting and assembly machinery (SAM complex) of the outer membrane. Acts as a chaperone-like protein that protects the hydrophobic precursors from aggregation and guide them through the mitochondrial intermembrane space. The sequence is that of Mitochondrial import inner membrane translocase subunit tim10 (tim10) from Schizosaccharomyces pombe (strain 972 / ATCC 24843) (Fission yeast).